The following is a 252-amino-acid chain: Probable transcriptional regulatory protein RF_0799 (252 aa).

The tract at residues 1-21 is disordered; that stretch reads MAGHSKFKNIQHRKGAQDKKR.

It belongs to the TACO1 family.

It is found in the cytoplasm. This is Probable transcriptional regulatory protein RF_0799 from Rickettsia felis (strain ATCC VR-1525 / URRWXCal2) (Rickettsia azadi).